Reading from the N-terminus, the 64-residue chain is uncharacterized protein (64 aa).

Over residues 1–14 (MFNFDPTDQPTDQH) the composition is skewed to polar residues. The interval 1 to 42 (MFNFDPTDQPTDQHLLQLPTDPHPLQQPIDPHPPPQPNNNLP) is disordered.

This is an uncharacterized protein from Dictyostelium discoideum (Social amoeba).